Here is a 304-residue protein sequence, read N- to C-terminus: tRNA-uridine aminocarboxypropyltransferase 1 (304 aa).

N-acetylserine is present on serine 2. Positions 206-209 (DSTW) match the DXTW motif.

This sequence belongs to the TDD superfamily. DTWD1 family.

It is found in the nucleus. It carries out the reaction a uridine in tRNA + S-adenosyl-L-methionine = a 3-[(3S)-3-amino-3-carboxypropyl]uridine in tRNA + S-methyl-5'-thioadenosine + H(+). Functionally, catalyzes the formation of 3-(3-amino-3-carboxypropyl)uridine (acp3U) at position 20 in the D-loop of several cytoplasmic tRNAs (acp3U(20)). In Pongo abelii (Sumatran orangutan), this protein is tRNA-uridine aminocarboxypropyltransferase 1.